Here is a 201-residue protein sequence, read N- to C-terminus: Musculin (201 aa).

Disordered regions lie at residues 1-108 (MSTG…NAAN) and 182-201 (RPDSDSKDVSAANRLCGTSA). Acidic residues predominate over residues 46 to 56 (SAEEEDGEEEP). Positions 66-71 (KRKRLR) match the Nuclear localization signal motif. Over residues 74–86 (DAGGAGGRAGGAG) the composition is skewed to gly residues. Positions 102-154 (SQRNAANARERARMRVLSKAFSRLKTSLPWVPPDTKLSKLDTLRLASSYIAHL) constitute a bHLH domain.

In terms of assembly, efficient DNA binding requires dimerization with another bHLH protein. Binds DNA as a homodimer or a heterodimer. Forms a heterodimer with TCF3.

The protein localises to the nucleus. In terms of biological role, transcription repressor that blocks myogenesis and activation of E-box dependent muscle genes. The protein is Musculin (Msc) of Mus musculus (Mouse).